The sequence spans 85 residues: Kunitz-type serine protease inhibitor homolog beta-bungarotoxin B3 chain (85 aa).

An N-terminal signal peptide occupies residues 1-24 (MSSGGLLLLLGLLTLWAELTPVSS). In terms of domain architecture, BPTI/Kunitz inhibitor spans 31–81 (CDKPPDTRICQTVVRAFYYKPSEKRCVQFRYGGCKGNGNHFKSDHLCRCEC). Cystine bridges form between cysteine 31-cysteine 81, cysteine 40-cysteine 64, and cysteine 56-cysteine 77.

It belongs to the venom Kunitz-type family. As to quaternary structure, heterodimer; disulfide-linked. The A chain has phospholipase A2 activity and the B chain shows homology with the basic protease inhibitors. In terms of tissue distribution, expressed by the venom gland.

It is found in the secreted. Its function is as follows. Beta-bungarotoxin is a presynaptic neurotoxin of the venom. The B chain is homologous to venom basic protease inhibitors but has no protease inhibitor activity and is non-toxic. The protein is Kunitz-type serine protease inhibitor homolog beta-bungarotoxin B3 chain of Bungarus candidus (Malayan krait).